We begin with the raw amino-acid sequence, 364 residues long: SH3 and cysteine-rich domain-containing protein 3 (364 aa).

Disordered stretches follow at residues 1-89 and 189-244; these read MTEK…NDKP and NKER…HKQP. The span at 64 to 78 shows a compositional bias: acidic residues; sequence YEEEEEEEEEEEEPP. Residues 89–140 form a Phorbol-ester/DAG-type zinc finger; the sequence is PHKFKDHFFKKPKFCDVCARMIVLNNKFGLRCKNCKTNIHEHCQSYVEMQRC. The span at 212 to 242 shows a compositional bias: basic and acidic residues; it reads ESARPEEGKPQDGNPEGDKKAEKKTPDDKHK. SH3 domains lie at 247 to 306 and 307 to 364; these read QQSH…RVRA and GERV…LEEI.

Interacts (via SH3 domains) with the calcium channels CACNA1S and CACNA1C. Component of a calcium channel complex with CACNA1S and CACNB1. Component of a calcium channel complex with CACNA1C and CACNB1.

It is found in the cytoplasm. It localises to the cell membrane. The protein resides in the sarcolemma. Its subcellular location is the T-tubule. In terms of biological role, required for normal excitation-contraction coupling in skeletal muscle and for normal muscle contraction in response to membrane depolarization. Required for normal Ca(2+) release from the sarcplasmic reticulum, which ultimately leads to muscle contraction. Probably functions via its effects on muscle calcium channels. Increases CACNA1S channel activity, in addition to its role in enhancing the expression of CACNA1S at the cell membrane. Has a redundant role in promoting the expression of the calcium channel CACNA1S at the cell membrane. Slows down the inactivation rate of the calcium channel CACNA1C. The polypeptide is SH3 and cysteine-rich domain-containing protein 3 (STAC3) (Homo sapiens (Human)).